The sequence spans 270 residues: Thiazole synthase (270 aa).

Lysine 111 acts as the Schiff-base intermediate with DXP in catalysis. Residues glycine 172, alanine 198–glycine 199, and asparagine 220–threonine 221 each bind 1-deoxy-D-xylulose 5-phosphate.

It belongs to the ThiG family. Homotetramer. Forms heterodimers with either ThiH or ThiS.

It is found in the cytoplasm. It carries out the reaction [ThiS sulfur-carrier protein]-C-terminal-Gly-aminoethanethioate + 2-iminoacetate + 1-deoxy-D-xylulose 5-phosphate = [ThiS sulfur-carrier protein]-C-terminal Gly-Gly + 2-[(2R,5Z)-2-carboxy-4-methylthiazol-5(2H)-ylidene]ethyl phosphate + 2 H2O + H(+). It participates in cofactor biosynthesis; thiamine diphosphate biosynthesis. Catalyzes the rearrangement of 1-deoxy-D-xylulose 5-phosphate (DXP) to produce the thiazole phosphate moiety of thiamine. Sulfur is provided by the thiocarboxylate moiety of the carrier protein ThiS. In vitro, sulfur can be provided by H(2)S. In Methylococcus capsulatus (strain ATCC 33009 / NCIMB 11132 / Bath), this protein is Thiazole synthase.